Consider the following 271-residue polypeptide: MWELRSIAFSRAVLAEFLATLLFVFFGLGSALQWASSPPSVLQIAVAFGLGIGILVQALGHVSGAHINPAVTVACLVGCHVSFLRAAFYVAAQLLGAVAGAAILHEITPVEIRGDLAVNALHNNATAGQAVTVELFLTMQLVLCIFASTDERRGDNLGSPALSIGFSVTLGHLLGIYFTGCSMNPARSLAPAVVTGKFDDHWVFWIGPLVGAIIGSLLYNYLLFPSAKSLQERLAVLKGLEPDTDWEEREVRRRQSVELHSPQSLPRGSKA.

Residues methionine 1–arginine 11 lie on the Cytoplasmic side of the membrane. The chain crosses the membrane as a helical span at residues alanine 12–leucine 32. At glutamine 33–serine 40 the chain is on the extracellular side. A helical transmembrane segment spans residues valine 41–leucine 59. Residues glycine 60 to glycine 64 are Cytoplasmic-facing. The segment at residues alanine 65–alanine 74 is an intramembrane region (discontinuously helical). The NPA 1 motif lies at asparagine 68 to alanine 70. The Cytoplasmic segment spans residues cysteine 75–arginine 85. Residues alanine 86–isoleucine 107 form a helical membrane-spanning segment. Residues threonine 108–alanine 127 lie on the Extracellular side of the membrane. The N-linked (GlcNAc...) asparagine glycan is linked to asparagine 124. A helical transmembrane segment spans residues glycine 128 to serine 148. Residues threonine 149–asparagine 156 lie on the Cytoplasmic side of the membrane. The helical transmembrane segment at leucine 157–isoleucine 176 threads the bilayer. Topologically, residues tyrosine 177–glycine 180 are extracellular. Residues cysteine 181–valine 193 constitute an intramembrane region (discontinuously helical). The NPA 2 signature appears at asparagine 184–alanine 186. The Extracellular portion of the chain corresponds to valine 194–histidine 201. A helical transmembrane segment spans residues tryptophan 202–leucine 222. Residues leucine 223–alanine 271 are Cytoplasmic-facing. Residues valine 251–alanine 271 form a disordered region. Phosphoserine is present on residues serine 256, serine 261, serine 264, and serine 269. A compositionally biased stretch (polar residues) spans serine 261 to alanine 271.

It belongs to the MIP/aquaporin (TC 1.A.8) family. Homotetramer. In terms of processing, ser-256 phosphorylation is necessary and sufficient for expression at the apical membrane. Endocytosis is not phosphorylation-dependent. Post-translationally, N-glycosylated. As to expression, detected in kidney, in cortical and the medullary collecting tubules (at protein level). Detected in kidney medulla and cortex.

Its subcellular location is the apical cell membrane. It is found in the basolateral cell membrane. The protein localises to the cell membrane. The protein resides in the cytoplasmic vesicle membrane. It localises to the golgi apparatus. Its subcellular location is the trans-Golgi network membrane. The enzyme catalyses H2O(in) = H2O(out). It catalyses the reaction glycerol(in) = glycerol(out). Forms a water-specific channel that provides the plasma membranes of renal collecting duct with high permeability to water, thereby permitting water to move in the direction of an osmotic gradient. Plays an essential role in renal water homeostasis. Could also be permeable to glycerol. This is Aquaporin-2 from Rattus norvegicus (Rat).